Consider the following 298-residue polypeptide: Glycine--tRNA ligase alpha subunit (298 aa).

The protein belongs to the class-II aminoacyl-tRNA synthetase family. As to quaternary structure, tetramer of two alpha and two beta subunits.

The protein resides in the cytoplasm. It carries out the reaction tRNA(Gly) + glycine + ATP = glycyl-tRNA(Gly) + AMP + diphosphate. The chain is Glycine--tRNA ligase alpha subunit from Helicobacter pylori (strain G27).